The sequence spans 411 residues: Probable glutamate dehydrogenase 3 (411 aa).

The active site involves Lys102.

This sequence belongs to the Glu/Leu/Phe/Val dehydrogenases family.

It catalyses the reaction L-glutamate + NAD(+) + H2O = 2-oxoglutarate + NH4(+) + NADH + H(+). The enzyme catalyses L-glutamate + NADP(+) + H2O = 2-oxoglutarate + NH4(+) + NADPH + H(+). The chain is Probable glutamate dehydrogenase 3 (GSH3) from Arabidopsis thaliana (Mouse-ear cress).